The following is a 330-amino-acid chain: Biotin synthase 2 (330 aa).

The Radical SAM core domain occupies 48–278 (MCGDGFDMCS…QAAIRLAGGR (231 aa)). [4Fe-4S] cluster contacts are provided by Cys-66, Cys-70, and Cys-73. Residues Ser-111, Cys-143, Cys-203, and Arg-273 each coordinate [2Fe-2S] cluster.

Belongs to the radical SAM superfamily. Biotin synthase family. As to quaternary structure, homodimer. [4Fe-4S] cluster is required as a cofactor. The cofactor is [2Fe-2S] cluster.

It catalyses the reaction (4R,5S)-dethiobiotin + (sulfur carrier)-SH + 2 reduced [2Fe-2S]-[ferredoxin] + 2 S-adenosyl-L-methionine = (sulfur carrier)-H + biotin + 2 5'-deoxyadenosine + 2 L-methionine + 2 oxidized [2Fe-2S]-[ferredoxin]. Its pathway is cofactor biosynthesis; biotin biosynthesis; biotin from 7,8-diaminononanoate: step 2/2. In terms of biological role, catalyzes the conversion of dethiobiotin (DTB) to biotin by the insertion of a sulfur atom into dethiobiotin via a radical-based mechanism. In Corynebacterium diphtheriae (strain ATCC 700971 / NCTC 13129 / Biotype gravis), this protein is Biotin synthase 2.